Here is a 132-residue protein sequence, read N- to C-terminus: Holo-[acyl-carrier-protein] synthase (132 aa).

Residues aspartate 8 and glutamate 57 each contribute to the Mg(2+) site.

Belongs to the P-Pant transferase superfamily. AcpS family. It depends on Mg(2+) as a cofactor.

The protein resides in the cytoplasm. The catalysed reaction is apo-[ACP] + CoA = holo-[ACP] + adenosine 3',5'-bisphosphate + H(+). In terms of biological role, transfers the 4'-phosphopantetheine moiety from coenzyme A to a Ser of acyl-carrier-protein. This is Holo-[acyl-carrier-protein] synthase from Methylobacterium nodulans (strain LMG 21967 / CNCM I-2342 / ORS 2060).